We begin with the raw amino-acid sequence, 202 residues long: ATP-dependent Clp protease proteolytic subunit 2 (202 aa).

Serine 99 (nucleophile) is an active-site residue. Histidine 124 is an active-site residue.

This sequence belongs to the peptidase S14 family. In terms of assembly, fourteen ClpP subunits assemble into 2 heptameric rings which stack back to back to give a disk-like structure with a central cavity, resembling the structure of eukaryotic proteasomes.

The protein resides in the cytoplasm. The catalysed reaction is Hydrolysis of proteins to small peptides in the presence of ATP and magnesium. alpha-casein is the usual test substrate. In the absence of ATP, only oligopeptides shorter than five residues are hydrolyzed (such as succinyl-Leu-Tyr-|-NHMec, and Leu-Tyr-Leu-|-Tyr-Trp, in which cleavage of the -Tyr-|-Leu- and -Tyr-|-Trp bonds also occurs).. Cleaves peptides in various proteins in a process that requires ATP hydrolysis. Has a chymotrypsin-like activity. Plays a major role in the degradation of misfolded proteins. This Desulfitobacterium hafniense (strain Y51) protein is ATP-dependent Clp protease proteolytic subunit 2.